The sequence spans 1021 residues: Probable LRR receptor-like serine/threonine-protein kinase RFK1 (1021 aa).

The first 39 residues, Met1 to Ala39, serve as a signal peptide directing secretion. The Extracellular segment spans residues Lys41–Tyr625. Asn96 is a glycosylation site (N-linked (GlcNAc...) asparagine). LRR repeat units follow at residues Asp99 to Leu122 and Pro123 to Ser146. Asn136, Asn147, and Asn168 each carry an N-linked (GlcNAc...) asparagine glycan. LRR repeat units follow at residues Leu148 to Asn168, Ser169 to Leu192, Val193 to Leu216, Asn218 to Trp240, and Lys241 to Asn266. N-linked (GlcNAc...) asparagine glycosylation is present at Asn218. N-linked (GlcNAc...) asparagine glycans are attached at residues Asn287 and Asn300. LRR repeat units follow at residues Val288–Leu312, Lys313–Glu336, Leu338–Asp359, and Ile361–Arg381. 2 N-linked (GlcNAc...) asparagine glycosylation sites follow: Asn486 and Asn512. The helical transmembrane segment at Ile626–Cys646 threads the bilayer. At Gly647–Pro1021 the chain is on the cytoplasmic side. Position 670 is a phosphothreonine (Thr670). The Protein kinase domain occupies Phe681–Tyr956. ATP is bound by residues Ile687 to Val695 and Lys709. Tyr754 is modified (phosphotyrosine). Asp807 (proton acceptor) is an active-site residue. The residue at position 840 (Ser840) is a Phosphoserine. Phosphothreonine is present on residues Thr841 and Thr846. A Phosphotyrosine modification is found at Tyr854. The segment at Glu985–Pro1021 is disordered. The segment covering Ser993–Ser1005 has biased composition (low complexity). Basic and acidic residues predominate over residues Gln1012–Pro1021.

It belongs to the protein kinase superfamily. Ser/Thr protein kinase family. In terms of tissue distribution, mostly expressed in flower buds, especially in stamens.

It is found in the membrane. The enzyme catalyses L-seryl-[protein] + ATP = O-phospho-L-seryl-[protein] + ADP + H(+). It carries out the reaction L-threonyl-[protein] + ATP = O-phospho-L-threonyl-[protein] + ADP + H(+). This chain is Probable LRR receptor-like serine/threonine-protein kinase RFK1 (RKF1), found in Arabidopsis thaliana (Mouse-ear cress).